The primary structure comprises 314 residues: Ferrochelatase (314 aa).

Residues His-184 and Glu-259 each coordinate Fe cation.

The protein belongs to the ferrochelatase family.

It localises to the cytoplasm. It carries out the reaction heme b + 2 H(+) = protoporphyrin IX + Fe(2+). Its pathway is porphyrin-containing compound metabolism; protoheme biosynthesis; protoheme from protoporphyrin-IX: step 1/1. Catalyzes the ferrous insertion into protoporphyrin IX. In Chlamydia trachomatis serovar D (strain ATCC VR-885 / DSM 19411 / UW-3/Cx), this protein is Ferrochelatase.